We begin with the raw amino-acid sequence, 129 residues long: M-zodatoxin-Lt8c (129 aa).

A signal peptide spans 1–20; that stretch reads MKYFVVALALVAAFACIAES. A propeptide spanning residues 21-60 is cleaved from the precursor; sequence KPAESEHELAEVEEENELADLEDAVWLEHLADLSDLEEAR. A Processing quadruplet motif motif is present at residues 57–60; it reads EEAR.

Cleavage of the propeptide depends on the processing quadruplet motif (XXXR, with at least one of X being E). As to expression, expressed by the venom gland.

It localises to the secreted. Functionally, insecticidal, cytolytic and antimicrobial peptide. Forms voltage-dependent, ion-permeable channels in membranes. At high concentration causes cell membrane lysis. This chain is M-zodatoxin-Lt8c (cit 1-3), found in Lachesana tarabaevi (Spider).